The primary structure comprises 173 residues: Inorganic pyrophosphatase (173 aa).

Substrate is bound by residues Lys-26, Arg-40, and Tyr-52. Residues Asp-62, Asp-67, and Asp-99 each contribute to the Mg(2+) site. Residue Tyr-138 coordinates substrate.

Belongs to the PPase family. As to quaternary structure, homohexamer. Requires Mg(2+) as cofactor.

Its subcellular location is the cytoplasm. The enzyme catalyses diphosphate + H2O = 2 phosphate + H(+). Its function is as follows. Catalyzes the hydrolysis of inorganic pyrophosphate (PPi) forming two phosphate ions. In Sulfolobus acidocaldarius (strain ATCC 33909 / DSM 639 / JCM 8929 / NBRC 15157 / NCIMB 11770), this protein is Inorganic pyrophosphatase.